The sequence spans 401 residues: Protein KlcB (401 aa).

Residues 253–311 (AARSNAKGKAGGRERDPASAETAMRCSTAKADDCKAEAGPVSPEATMPGAGEASCSTAR) form a disordered region.

This is Protein KlcB (klcB) from Escherichia coli.